Here is a 466-residue protein sequence, read N- to C-terminus: Glutamate decarboxylase beta (466 aa).

Substrate-binding residues include threonine 62 and asparagine 83. Pyridoxal 5'-phosphate-binding positions include 126 to 127 (SS), threonine 212, and histidine 275. Lysine 276 carries the N6-(pyridoxal phosphate)lysine modification. N6-acetyllysine occurs at positions 446, 453, and 464.

Belongs to the group II decarboxylase family. As to quaternary structure, homohexamer composed of three dimers. It depends on pyridoxal 5'-phosphate as a cofactor.

The catalysed reaction is L-glutamate + H(+) = 4-aminobutanoate + CO2. Its function is as follows. Converts glutamate to gamma-aminobutyrate (GABA), consuming one intracellular proton in the reaction. The gad system helps to maintain a near-neutral intracellular pH when cells are exposed to extremely acidic conditions. The ability to survive transit through the acidic conditions of the stomach is essential for successful colonization of the mammalian host by commensal and pathogenic bacteria. The chain is Glutamate decarboxylase beta (gadB) from Shigella flexneri.